The following is a 301-amino-acid chain: Probable alpha-L-glutamate ligase (301 aa).

In terms of domain architecture, ATP-grasp spans 104-287 (MQLLSRKGIG…VAGLIIDFIE (184 aa)). Residues Lys141, 178–179 (EF), Asp187, and 211–213 (RSN) each bind ATP. Asp248, Glu260, and Asn262 together coordinate Mg(2+). Residues Asp248, Glu260, and Asn262 each contribute to the Mn(2+) site.

The protein belongs to the RimK family. Mg(2+) serves as cofactor. Mn(2+) is required as a cofactor.

The protein is Probable alpha-L-glutamate ligase of Aliivibrio fischeri (strain MJ11) (Vibrio fischeri).